The primary structure comprises 501 residues: MEIHTYEKEFFDLLKRISHYSEAVALMHWDSRTGAPKNGSEDRAESIGQLSTDIFNIQTSDRMKELIDVLYERFDDLSEDTKKAVELAKKEYEENKKIPEAEYKEYVILCSKAETAWEEAKGKSDFSLFSPYLEQLIEFNKRFITYWGYQEHPYDALLDLFEPGVTVKVLDQLFAELKEAIIPLVKQVTASGNKPDTSFITKAFPKEKQKELSLYFLQELGYDFDGGRLDETVHPFATTLNRGDVRVTTRYDEKDFRTAIFGTIHECGHAIYEQNIDEALSGTNLSDGASMGIHESQSLFYENFIGRNKHFWTPYYKKIQEASPVQFKDISLDDFVRAINESKPSFIRVEADELTYPLHIIIRYEIEKAIFSNEVSVEDLPSLWNQKYQDYLGITPQTDAEGILQDVHWAGGDFGYFPSYALGYMYAAQLKQKMLEDLPEFDALLERGEFHPIKQWLTEKVHIHGKRKKPLDIIKDATGEELNVRYLIDYLSNKYSNLYLL.

Positions 3 to 496 (IHTYEKEFFD…LIDYLSNKYS (494 aa)) constitute a Peptidase M32 domain. An HPF motif is present at residues 234–236 (HPF). The DXRXT signature appears at 244–248 (DVRVT). H265 serves as a coordination point for Zn(2+). An HEXXH motif is present at residues 265–269 (HECGH). The Proton donor/acceptor role is filled by E266. The Zn(2+) site is built by H269 and E295. The short motif at 294 to 297 (HESQ) is the HES/GQ element. An I/NRXXA/SD motif is present at residues 347–352 (IRVEAD). A GXXQDXHW motif is present at residues 402–409 (GILQDVHW).

Belongs to the peptidase M32 family. In terms of assembly, homodimer. Requires Zn(2+) as cofactor.

It carries out the reaction Release of a C-terminal amino acid with broad specificity, except for -Pro.. Its function is as follows. Broad specificity carboxypetidase that releases amino acids sequentially from the C-terminus, including neutral, aromatic, polar and basic residues. Has lower activity with substrates ending with His or Trp. The protein is Carboxypeptidase 1 (ypwA) of Bacillus subtilis (strain 168).